We begin with the raw amino-acid sequence, 322 residues long: Phosphatidylserine decarboxylase proenzyme (322 aa).

Active-site charge relay system; for autoendoproteolytic cleavage activity residues include Asp-90, His-147, and Ser-254. Ser-254 functions as the Schiff-base intermediate with substrate; via pyruvic acid; for decarboxylase activity in the catalytic mechanism. Ser-254 is modified (pyruvic acid (Ser); by autocatalysis). Residues Phe-290–Val-322 are disordered. The segment covering Glu-308–Val-322 has biased composition (basic and acidic residues).

The protein belongs to the phosphatidylserine decarboxylase family. PSD-B subfamily. Prokaryotic type I sub-subfamily. In terms of assembly, heterodimer of a large membrane-associated beta subunit and a small pyruvoyl-containing alpha subunit. Pyruvate is required as a cofactor. Post-translationally, is synthesized initially as an inactive proenzyme. Formation of the active enzyme involves a self-maturation process in which the active site pyruvoyl group is generated from an internal serine residue via an autocatalytic post-translational modification. Two non-identical subunits are generated from the proenzyme in this reaction, and the pyruvate is formed at the N-terminus of the alpha chain, which is derived from the carboxyl end of the proenzyme. The autoendoproteolytic cleavage occurs by a canonical serine protease mechanism, in which the side chain hydroxyl group of the serine supplies its oxygen atom to form the C-terminus of the beta chain, while the remainder of the serine residue undergoes an oxidative deamination to produce ammonia and the pyruvoyl prosthetic group on the alpha chain. During this reaction, the Ser that is part of the protease active site of the proenzyme becomes the pyruvoyl prosthetic group, which constitutes an essential element of the active site of the mature decarboxylase.

Its subcellular location is the cell membrane. It carries out the reaction a 1,2-diacyl-sn-glycero-3-phospho-L-serine + H(+) = a 1,2-diacyl-sn-glycero-3-phosphoethanolamine + CO2. It functions in the pathway phospholipid metabolism; phosphatidylethanolamine biosynthesis; phosphatidylethanolamine from CDP-diacylglycerol: step 2/2. Its function is as follows. Catalyzes the formation of phosphatidylethanolamine (PtdEtn) from phosphatidylserine (PtdSer). The chain is Phosphatidylserine decarboxylase proenzyme from Escherichia fergusonii (strain ATCC 35469 / DSM 13698 / CCUG 18766 / IAM 14443 / JCM 21226 / LMG 7866 / NBRC 102419 / NCTC 12128 / CDC 0568-73).